The primary structure comprises 553 residues: Muellerian-inhibiting factor (553 aa).

The first 22 residues, 1–22 (MQGPHLSLLLLLLATMGAVLQA), serve as a signal peptide directing secretion. Positions 23–445 (DTVEELTNTR…GREGRGRAGR (423 aa)) are excised as a propeptide. N-linked (GlcNAc...) asparagine glycosylation is found at asparagine 325 and asparagine 409. Disulfide bonds link cysteine 455-cysteine 519, cysteine 481-cysteine 550, and cysteine 485-cysteine 552.

The protein belongs to the TGF-beta family. Homodimer; disulfide-linked. In terms of processing, preproprotein is proteolytically processed to generate N- and C-terminal cleavage products that homodimerize and associate to form a biologically active non-covalent complex. Binding of the non-covalent complex to AMHR2 induces dissociation of the pro-region from the mature C-terminal dimer. The N-terminal portion of the protein, despite having no intrinsic activity, has the role of amplifying the activity of the C-terminus. In terms of tissue distribution, mainly expressed in granulosa cells from preantral and small antral follicles.

The protein resides in the secreted. In terms of biological role, plays an important role in several reproductive functions. Induces Muellerian duct regression during male fetal sexual differentiation and plays a role in Leydig cell differentiation and function. In female acts as a negative regulator of the primordial to primary follicle transition and decreases FSH sensitivity of growing follicles. AMH signals by binding to a specific type-II receptor, AMHR2, that heterodimerizes with type-I receptors (ACVR1 and BMPR1A), and recruiting SMAD proteins that are translocated to the nucleus to regulate target gene expression. The chain is Muellerian-inhibiting factor (Amh) from Rattus norvegicus (Rat).